The following is a 141-amino-acid chain: Hemoglobin subunit alpha (141 aa).

A Globin domain is found at 1–141; it reads VLSPADKKNV…VSTVLTSKYR (141 aa). At Ser3 the chain carries Phosphoserine. Lys7 and Lys11 each carry N6-succinyllysine. Lys16 is modified (N6-acetyllysine; alternate). At Lys16 the chain carries N6-succinyllysine; alternate. A Phosphotyrosine modification is found at Tyr24. Ser35 is modified (phosphoserine). Lys40 carries the N6-succinyllysine modification. Ser49 carries the phosphoserine modification. His58 lines the O2 pocket. Residue His87 coordinates heme b. At Ser102 the chain carries Phosphoserine. The residue at position 108 (Thr108) is a Phosphothreonine. Residues Ser124 and Ser131 each carry the phosphoserine modification. Phosphothreonine is present on residues Thr134 and Thr137. Residue Ser138 is modified to Phosphoserine.

This sequence belongs to the globin family. In terms of assembly, heterotetramer of two alpha chains and two beta chains. In terms of tissue distribution, red blood cells.

Involved in oxygen transport from the lung to the various peripheral tissues. Functionally, hemopressin acts as an antagonist peptide of the cannabinoid receptor CNR1. Hemopressin-binding efficiently blocks cannabinoid receptor CNR1 and subsequent signaling. This Spermophilus citellus (European ground squirrel) protein is Hemoglobin subunit alpha (HBA).